The primary structure comprises 99 residues: MAFRKFLPLFDRVLVERLMAETVTKGGIMLPEKSQGKVLQATVVAVGPGSMNQKGEVQPMSVKVGEKVLLPQYGGTKVVLEDKDYFLFRDADILGKYVD.

It belongs to the GroES chaperonin family. In terms of assembly, homoheptamer arranged in a ring structure. 2 heptameric Hsp10 rings interact with a Hsp60 tetradecamer in the structure of a back-to-back double heptameric ring to form the symmetrical football complex.

Its subcellular location is the mitochondrion matrix. In terms of biological role, co-chaperonin implicated in mitochondrial protein import and macromolecular assembly. Together with Hsp60, facilitates the correct folding of imported proteins. May also prevent misfolding and promote the refolding and proper assembly of unfolded polypeptides generated under stress conditions in the mitochondrial matrix. The functional units of these chaperonins consist of heptameric rings of the large subunit Hsp60, which function as a back-to-back double ring. In a cyclic reaction, Hsp60 ring complexes bind one unfolded substrate protein per ring, followed by the binding of ATP and association with 2 heptameric rings of the co-chaperonin Hsp10. This leads to sequestration of the substrate protein in the inner cavity of Hsp60 where, for a certain period of time, it can fold undisturbed by other cell components. Synchronous hydrolysis of ATP in all Hsp60 subunits results in the dissociation of the chaperonin rings and the release of ADP and the folded substrate protein. The polypeptide is 10 kDa heat shock protein, mitochondrial (hspe1) (Oryzias latipes (Japanese rice fish)).